A 328-amino-acid chain; its full sequence is Putative tyrosine-protein kinase C03B1.5 (328 aa).

The region spanning 25–288 is the Protein kinase domain; it reads WSPALKIGSG…ALHASSQTYL (264 aa). Residues 31–39 and K62 contribute to the ATP site; that span reads IGSGAFGEV. D155 functions as the Proton acceptor in the catalytic mechanism.

Belongs to the protein kinase superfamily. Tyr protein kinase family.

The catalysed reaction is L-tyrosyl-[protein] + ATP = O-phospho-L-tyrosyl-[protein] + ADP + H(+). The chain is Putative tyrosine-protein kinase C03B1.5 from Caenorhabditis elegans.